Consider the following 1105-residue polypeptide: MEEEESLEGIISIDESLITSRLSQILDDVLDDRSSSHSVEKLKDVAVKYLQFCQFQPTLLDKLLSKYVPNLASYLLKVKNIGKCNSITVILYQFCKIRGYKAVRVLFPVGVQYIKELYTLLNESSNNTWHFHYIVLLWLSQALNTPFPLNSLDDSLDVKKTIYTIAIKYLENSGIDKEASCLVLSRLFSRDDGLDLLLGFLHHCESSWFKRSIFYKIGCLFSLSSFLKICPRNDCLQTVDVAFQFLNVAREDLVGQENSALRKLLCKCYTRLGIVLLPVNSSPNWKYSISNPDSFFQLPDDSNEEVHIYLEVIVDFLLSSVSDIDSFVRWSAAKGLAKIISRLPWNLAEQVIDAIIELMTENMFLNPIENTVNISITSPLVWHGAILFFAKLAGAGLIKYSKCLHILPLIEVGLSYEVRYGTRVTGQSIRDASCYFVWSFYHCYSKSAIEGLQTNLILCLLQTVLFDNEINVRRAATAALFEVIGRHASIPDGLSLISHINYVSVTDISNCYGDLCMKVAHFPQFRSCVFQRLFTNLQHWDVKVQQLSAFSLRQLSIKYPKELSIYLPPILDYLSVGNADFIFGYTIGLASIIGGFLSISFPFDINRIHDLLSHKNLLSLKKFSRQQQTKIILGILKGIQQIFANDIRVDRAFFSEAFSVIIAAIDLQEETIIKDISDAYSVLVKFDDMEETLEVLLDYIRKCSTSKEARIVYIILQNLPNISFRYQKKICKLLLDIYPQLHSIDYQAPVANALQNIIPFTYEKTESIEEFVKELLQVCSNYLTDTRGDVGSWIRKPAMKAISSLLVKDSSGKKLSEDIVWCCISYIIRQTFDKIDSLRGLAYQALEQIRVHYLIRRCEALTNIINRIRNNPNMDGEVLNELNISLLEIPNLRLQAFYGITVFTADGFGSDLAVKCFEFYLSYVYQLEDSFKKSNSRYGKRDLLQLYIDILSSEDEIARFYFPIMKSFTSLLAYGCFTDFQNVKGMSKAIFIVQRRALTCKSPGGLSAILELYRTLFLSKNELLRHHALKYTANLLLNPIEKVRYQAADTLLYAKSIGLLTFLPNELNQKLLTLDWFVPVSQNATFVKQLRNIIQKQIDKLIADR.

N-linked (GlcNAc...) asparagine glycans are attached at residues N122 and N126. 4 HEAT repeats span residues 308-345 (IYLE…RLPW), 347-385 (LAEQ…WHGA), 401-446 (SKCL…CYSK), and 452-489 (LQTN…RHAS). A glycan (N-linked (GlcNAc...) asparagine) is linked at N373. N721, N883, and N1083 each carry an N-linked (GlcNAc...) asparagine glycan.

Interacts with alp21.

Its subcellular location is the cytoplasm. It localises to the cytoskeleton. Functionally, has a function in the folding of beta-tubulin. Microtubule-associated protein that is essential to direct polarized cell growth and to position the nucleus and septum to the center of the cell during mitosis. The protein is Tubulin-folding cofactor D (alp1) of Schizosaccharomyces pombe (strain 972 / ATCC 24843) (Fission yeast).